A 78-amino-acid chain; its full sequence is MKLTCMMIVAVLFLTAWTSVTAVNTRGELENLFLRASHEMNSEASKLDKKVCVDGGTFCGFPKIGGPCCSGWCIFVCL.

The N-terminal stretch at 1–22 is a signal peptide; that stretch reads MKLTCMMIVAVLFLTAWTSVTA. Positions 23–48 are excised as a propeptide; sequence VNTRGELENLFLRASHEMNSEASKLD. 3 disulfides stabilise this stretch: cysteine 52–cysteine 69, cysteine 59–cysteine 73, and cysteine 68–cysteine 77.

This sequence belongs to the conotoxin O1 superfamily. As to expression, expressed by the venom duct.

It is found in the secreted. Omega-conotoxins act at presynaptic membranes, they bind and block voltage-gated calcium channels (Cav). This chain is Omega-conotoxin-like ArMKLT1-011, found in Conus arenatus (Sand-dusted cone).